Here is a 196-residue protein sequence, read N- to C-terminus: Peptidyl-tRNA hydrolase (196 aa).

Residue tyrosine 16 coordinates tRNA. Residue histidine 21 is the Proton acceptor of the active site. Residues phenylalanine 67, asparagine 69, and asparagine 115 each contribute to the tRNA site.

It belongs to the PTH family. Monomer.

Its subcellular location is the cytoplasm. It catalyses the reaction an N-acyl-L-alpha-aminoacyl-tRNA + H2O = an N-acyl-L-amino acid + a tRNA + H(+). Hydrolyzes ribosome-free peptidyl-tRNAs (with 1 or more amino acids incorporated), which drop off the ribosome during protein synthesis, or as a result of ribosome stalling. In terms of biological role, catalyzes the release of premature peptidyl moieties from peptidyl-tRNA molecules trapped in stalled 50S ribosomal subunits, and thus maintains levels of free tRNAs and 50S ribosomes. This is Peptidyl-tRNA hydrolase from Edwardsiella ictaluri (strain 93-146).